A 128-amino-acid chain; its full sequence is MARLAGVDLPPGKRAEIGLTYIYGIGRTRSKSLLHRAGIDFDKKIRDLTEDEINKVRTILEEEGAVEGDLRKEISMNIKRHIEMGSYRGLRHRRSLPVRGQRTHTNARTRKGPRRGTVANKKKATGKT.

The tract at residues 85 to 128 (GSYRGLRHRRSLPVRGQRTHTNARTRKGPRRGTVANKKKATGKT) is disordered. The segment covering 89 to 128 (GLRHRRSLPVRGQRTHTNARTRKGPRRGTVANKKKATGKT) has biased composition (basic residues).

Belongs to the universal ribosomal protein uS13 family. As to quaternary structure, part of the 30S ribosomal subunit. Forms a loose heterodimer with protein S19. Forms two bridges to the 50S subunit in the 70S ribosome.

Functionally, located at the top of the head of the 30S subunit, it contacts several helices of the 16S rRNA. In the 70S ribosome it contacts the 23S rRNA (bridge B1a) and protein L5 of the 50S subunit (bridge B1b), connecting the 2 subunits; these bridges are implicated in subunit movement. Contacts the tRNAs in the A and P-sites. This Solibacter usitatus (strain Ellin6076) protein is Small ribosomal subunit protein uS13.